A 464-amino-acid polypeptide reads, in one-letter code: Glucose-6-phosphate isomerase (464 aa).

The Proton donor role is filled by Glu290. Residues His319 and Lys433 contribute to the active site.

Belongs to the GPI family.

Its subcellular location is the cytoplasm. It carries out the reaction alpha-D-glucose 6-phosphate = beta-D-fructose 6-phosphate. The protein operates within carbohydrate biosynthesis; gluconeogenesis. It functions in the pathway carbohydrate degradation; glycolysis; D-glyceraldehyde 3-phosphate and glycerone phosphate from D-glucose: step 2/4. Its function is as follows. Catalyzes the reversible isomerization of glucose-6-phosphate to fructose-6-phosphate. The sequence is that of Glucose-6-phosphate isomerase from Carboxydothermus hydrogenoformans (strain ATCC BAA-161 / DSM 6008 / Z-2901).